A 390-amino-acid chain; its full sequence is Flap endonuclease 1-1 (390 aa).

An N-domain region spans residues 1–108 (MGIHQLMQFL…GELARRKKLK (108 aa)). Asp34 is a Mg(2+) binding site. Residue Arg74 participates in DNA binding. Positions 90, 162, 164, 183, and 185 each coordinate Mg(2+). The segment at 126–254 (QALLQHQRTT…GTAYKLIKEF (129 aa)) is I-domain. DNA is bound at residue Glu162. Positions 232 and 234 each coordinate DNA. Asp234 contributes to the Mg(2+) binding site. The interval 348–356 (FQSRLENFF) is interaction with PCNA. The tract at residues 359–390 (TTKIIHPNNSKAKGKANKKNEQTQKSGGKKKI) is disordered.

This sequence belongs to the XPG/RAD2 endonuclease family. FEN1 subfamily. As to quaternary structure, interacts with PCNA. Three molecules of FEN1 bind to one PCNA trimer with each molecule binding to one PCNA monomer. PCNA stimulates the nuclease activity without altering cleavage specificity. The cofactor is Mg(2+). In terms of processing, phosphorylated. Phosphorylation upon DNA damage induces relocalization to the nuclear plasma.

It is found in the nucleus. It localises to the nucleolus. The protein resides in the nucleoplasm. Its subcellular location is the mitochondrion. Structure-specific nuclease with 5'-flap endonuclease and 5'-3' exonuclease activities involved in DNA replication and repair. During DNA replication, cleaves the 5'-overhanging flap structure that is generated by displacement synthesis when DNA polymerase encounters the 5'-end of a downstream Okazaki fragment. It enters the flap from the 5'-end and then tracks to cleave the flap base, leaving a nick for ligation. Also involved in the long patch base excision repair (LP-BER) pathway, by cleaving within the apurinic/apyrimidinic (AP) site-terminated flap. Acts as a genome stabilization factor that prevents flaps from equilibrating into structures that lead to duplications and deletions. Also possesses 5'-3' exonuclease activity on nicked or gapped double-stranded DNA, and exhibits RNase H activity. Also involved in replication and repair of rDNA and in repairing mitochondrial DNA. This chain is Flap endonuclease 1-1, found in Paramecium tetraurelia.